The chain runs to 340 residues: Ketol-acid reductoisomerase (NADP(+)) (340 aa).

Residues 3-182 form the KARI N-terminal Rossmann domain; it reads VTMYYEEDVE…GCARVGIIET (180 aa). NADP(+)-binding positions include 26–29, arginine 49, serine 53, and 83–86; these read YGSQ and DELQ. The active site involves histidine 108. Glycine 134 provides a ligand contact to NADP(+). A KARI C-terminal knotted domain is found at 183-328; the sequence is TFKEETEEDL…AELRKAMPFT (146 aa). Residues aspartate 191, glutamate 195, glutamate 227, and glutamate 231 each coordinate Mg(2+). A substrate-binding site is contributed by serine 252.

It belongs to the ketol-acid reductoisomerase family. The cofactor is Mg(2+).

It catalyses the reaction (2R)-2,3-dihydroxy-3-methylbutanoate + NADP(+) = (2S)-2-acetolactate + NADPH + H(+). It carries out the reaction (2R,3R)-2,3-dihydroxy-3-methylpentanoate + NADP(+) = (S)-2-ethyl-2-hydroxy-3-oxobutanoate + NADPH + H(+). It participates in amino-acid biosynthesis; L-isoleucine biosynthesis; L-isoleucine from 2-oxobutanoate: step 2/4. Its pathway is amino-acid biosynthesis; L-valine biosynthesis; L-valine from pyruvate: step 2/4. Involved in the biosynthesis of branched-chain amino acids (BCAA). Catalyzes an alkyl-migration followed by a ketol-acid reduction of (S)-2-acetolactate (S2AL) to yield (R)-2,3-dihydroxy-isovalerate. In the isomerase reaction, S2AL is rearranged via a Mg-dependent methyl migration to produce 3-hydroxy-3-methyl-2-ketobutyrate (HMKB). In the reductase reaction, this 2-ketoacid undergoes a metal-dependent reduction by NADPH to yield (R)-2,3-dihydroxy-isovalerate. The polypeptide is Ketol-acid reductoisomerase (NADP(+)) (Lactococcus lactis subsp. cremoris (strain MG1363)).